The primary structure comprises 100 residues: Urease subunit gamma (100 aa).

The protein belongs to the urease gamma subunit family. In terms of assembly, heterotrimer of UreA (gamma), UreB (beta) and UreC (alpha) subunits. Three heterotrimers associate to form the active enzyme.

Its subcellular location is the cytoplasm. It carries out the reaction urea + 2 H2O + H(+) = hydrogencarbonate + 2 NH4(+). It participates in nitrogen metabolism; urea degradation; CO(2) and NH(3) from urea (urease route): step 1/1. The polypeptide is Urease subunit gamma (Proteus hauseri).